The primary structure comprises 414 residues: MSYYVLSKIFLYSGYLVIGFLSFTIFNKNLRNKIRDKLKNLYFLYYLTFFTLFIISSNLSYYFTEKQLLEDFNIFEKEFFEIHKINEQFFQKYLLNFPVPIRMELMSKFDPLYTVFNASFEKYAKNIGKSSYEIQTNYKNYIRTTNSEIKEKLEQIKENITPIYNKYKLPILNGENTEISIDENGNIIPVIKNTNGQITELLFYDQNYNLIPFKKFESYKVRFDLIPENKNINFKELINVYYLDEKNIITPIEYYKNNIDMSPYYIDLQENKDDFLKAIKIKKEYGLYIEKKKQLQNLTENDKLDDFKEFLLKNNNIFSLNTIFSNGNPIFTYAINVKAKSIINYLITKEFNINLTNQNSQTALHSAIIQKYDLNFIKSLIEKGANPNIRDGDNKLPIDYSDKTSEIYKYLIGI.

ANK repeat units follow at residues 326 to 355 and 359 to 389; these read NGNPIFTYAINVKAKSIINYLITKEFNINL and NSQTALHSAIIQKYDLNFIKSLIEKGANPNI.

The polypeptide is Putative ankyrin repeat protein BB_B28 (Borreliella burgdorferi (strain ATCC 35210 / DSM 4680 / CIP 102532 / B31) (Borrelia burgdorferi)).